We begin with the raw amino-acid sequence, 167 residues long: Mediator of RNA polymerase II transcription subunit 10 (167 aa).

The segment at 54 to 92 (STHTKPHPPPPPPPQPTDPTTAAAPALRDNPDPPLSSIQ) is disordered. The segment covering 60-70 (HPPPPPPPQPT) has biased composition (pro residues).

This sequence belongs to the Mediator complex subunit 10 family. In terms of assembly, component of the Mediator complex.

It localises to the nucleus. Its function is as follows. Component of the Mediator complex, a coactivator involved in the regulated transcription of nearly all RNA polymerase II-dependent genes. Mediator functions as a bridge to convey information from gene-specific regulatory proteins to the basal RNA polymerase II transcription machinery. Mediator is recruited to promoters by direct interactions with regulatory proteins and serves as a scaffold for the assembly of a functional preinitiation complex with RNA polymerase II and the general transcription factors. The chain is Mediator of RNA polymerase II transcription subunit 10 (nut2) from Aspergillus clavatus (strain ATCC 1007 / CBS 513.65 / DSM 816 / NCTC 3887 / NRRL 1 / QM 1276 / 107).